The following is a 224-amino-acid chain: Phosphoglycolate phosphatase (224 aa).

D11 functions as the Nucleophile in the catalytic mechanism. The Mg(2+) site is built by D11, D13, and D177.

Belongs to the HAD-like hydrolase superfamily. CbbY/CbbZ/Gph/YieH family. The cofactor is Mg(2+).

The catalysed reaction is 2-phosphoglycolate + H2O = glycolate + phosphate. The protein operates within organic acid metabolism; glycolate biosynthesis; glycolate from 2-phosphoglycolate: step 1/1. Its function is as follows. Specifically catalyzes the dephosphorylation of 2-phosphoglycolate. Is involved in the dissimilation of the intracellular 2-phosphoglycolate formed during the DNA repair of 3'-phosphoglycolate ends, a major class of DNA lesions induced by oxidative stress. The sequence is that of Phosphoglycolate phosphatase from Mannheimia succiniciproducens (strain KCTC 0769BP / MBEL55E).